A 132-amino-acid polypeptide reads, in one-letter code: Small ribosomal subunit protein uS8 (132 aa).

The protein belongs to the universal ribosomal protein uS8 family. In terms of assembly, part of the 30S ribosomal subunit. Contacts proteins S5 and S12.

Functionally, one of the primary rRNA binding proteins, it binds directly to 16S rRNA central domain where it helps coordinate assembly of the platform of the 30S subunit. The protein is Small ribosomal subunit protein uS8 of Nitrobacter hamburgensis (strain DSM 10229 / NCIMB 13809 / X14).